Consider the following 306-residue polypeptide: UDP-N-acetylenolpyruvoylglucosamine reductase (306 aa).

One can recognise an FAD-binding PCMH-type domain in the interval 28–193 (KVGGPADFLA…VSAKFSLKPG (166 aa)). Arg172 is a catalytic residue. The active-site Proton donor is Ser222. The active site involves Glu292.

The protein belongs to the MurB family. Requires FAD as cofactor.

The protein resides in the cytoplasm. It carries out the reaction UDP-N-acetyl-alpha-D-muramate + NADP(+) = UDP-N-acetyl-3-O-(1-carboxyvinyl)-alpha-D-glucosamine + NADPH + H(+). It participates in cell wall biogenesis; peptidoglycan biosynthesis. Functionally, cell wall formation. The chain is UDP-N-acetylenolpyruvoylglucosamine reductase from Streptococcus mutans serotype c (strain ATCC 700610 / UA159).